The sequence spans 207 residues: Small ribosomal subunit protein bS6c (207 aa).

Residues 1–59 (MASSLCVSNSTICPLPNVSSQPLLSFSHSLRPFISKSKPMCASIQKRDGSQFVVKSQAL) constitute a chloroplast transit peptide. The segment at 69-99 (GFGSDDDPTSPSGSGVSTALEDKPEPQCPPG) is disordered. Low complexity predominate over residues 77–86 (TSPSGSGVST).

It belongs to the bacterial ribosomal protein bS6 family. In terms of assembly, part of the 30S ribosomal subunit.

It is found in the plastid. It localises to the chloroplast. In terms of biological role, binds together with bS18 to 16S ribosomal RNA. The polypeptide is Small ribosomal subunit protein bS6c (RPS6) (Arabidopsis thaliana (Mouse-ear cress)).